The sequence spans 319 residues: Transmembrane protein 121 (319 aa).

The next 7 membrane-spanning stretches (helical) occupy residues 10 to 30 (HVCL…AYLV), 43 to 63 (IIVL…AVWV), 74 to 94 (YAMI…YFIF), 112 to 132 (ALTL…VALD), 150 to 170 (LFWV…LWEP), 174 to 194 (GLPL…LLVL), and 214 to 234 (MMLY…LARA). Pro residues predominate over residues 277 to 306 (PALSLELQPPPPQRNSVPPPPPPLHGPPGR). Positions 277 to 319 (PALSLELQPPPPQRNSVPPPPPPLHGPPGRPHMSSPTRDPLDT) are disordered.

It belongs to the TMEM121 family. Highly expressed in heart and detected in pancreas, liver and skeletal muscle.

Its subcellular location is the membrane. Functionally, may play a role in MAPK signaling. The polypeptide is Transmembrane protein 121 (TMEM121) (Homo sapiens (Human)).